Consider the following 240-residue polypeptide: Uridylate kinase (240 aa).

12 to 15 (KLSG) serves as a coordination point for ATP. An involved in allosteric activation by GTP region spans residues 20–25 (GKQGFG). Glycine 54 lines the UMP pocket. Glycine 55 and arginine 59 together coordinate ATP. Residues aspartate 74 and 135–142 (TGNPYFST) contribute to the UMP site. 3 residues coordinate ATP: asparagine 163, tyrosine 169, and aspartate 172.

This sequence belongs to the UMP kinase family. Homohexamer.

The protein resides in the cytoplasm. It catalyses the reaction UMP + ATP = UDP + ADP. Its pathway is pyrimidine metabolism; CTP biosynthesis via de novo pathway; UDP from UMP (UMPK route): step 1/1. Its activity is regulated as follows. Allosterically activated by GTP. Inhibited by UTP. Its function is as follows. Catalyzes the reversible phosphorylation of UMP to UDP. The chain is Uridylate kinase from Geobacillus kaustophilus (strain HTA426).